The sequence spans 341 residues: Methionine import ATP-binding protein MetN 1 (341 aa).

The ABC transporter domain occupies 2–241 (IEFRQVSKSF…PKTTIAQNFV (240 aa)). ATP is bound at residue 38–45 (GYSGAGKS).

This sequence belongs to the ABC transporter superfamily. Methionine importer (TC 3.A.1.24) family. The complex is composed of two ATP-binding proteins (MetN), two transmembrane proteins (MetI) and a solute-binding protein (MetQ).

It localises to the cell membrane. It carries out the reaction L-methionine(out) + ATP + H2O = L-methionine(in) + ADP + phosphate + H(+). The enzyme catalyses D-methionine(out) + ATP + H2O = D-methionine(in) + ADP + phosphate + H(+). In terms of biological role, part of the ABC transporter complex MetNIQ involved in methionine import. Responsible for energy coupling to the transport system. This Staphylococcus aureus (strain MRSA252) protein is Methionine import ATP-binding protein MetN 1.